A 777-amino-acid chain; its full sequence is MGRGSGTFERLLDKATSQLLLETDWESILQICDLIRQGDTQAKYAVSSIKKKVNDKNPHVALYALEVMESVVKNCGQTVHDEVANKQTMEELKDLLKRQVEVNVRNKILYLIQAWAHAFRNEPKYKVVQDTYQIMKVEGHVFPEFKESDAMFAAERAPDWVDAEECHRCRVQFGVMTRKHHCRACGQIFCGKCSSKYSTIPKFGIEKEVRVCEPCFEQLNKKAEGKAASTTELPPEYLTSPLSQQSQLPPKRDETALQEEEELQLALALSQSEAEEKERMRQKSAYTAYPKAEPTPVASSAPPASSLYSSPVNSSAPLAEDIDPELARYLNRNYWEKKQEEARKSPTPSAPVPLTEPTAQPGEGHAIPANVETSLPETDPQAVTAAGAAFSEQYQNGESEESHAQFLKALQNAVTTFVNRMKSNHVRGRSITNDSAVLSLFQSINTMHPQLLELLNQLDERRLYYEGLQDKLAQIRDARGALSALREEHREKLRRAAEEAERQRQIQLAQKLEIMRQKKQEYLEVQRQLAIQRLQEQEKERQMRLEQQKQTIQMRAQMPAFSLPYAQLQAMPAAGGVLYQPSGPASFAGTFSPAGSVEGSPMHTMYMSQPAPAASGPYPSMPAAAADPSMVSAYMYPAGAAGAQAAAQGPAGPTTSPAYSSYQPTPTQGYQTVASQAPQSLPAISQPPQSGTMGYMGSQSVSMGYQPYSMQNLMPTLPGQDAPLPPPQQPYISGQQPVYQQMAPSSGPPQQQPPVAQQPPAQGPPAQGSEAQLISFD.

The region spanning 15 to 143 (ATSQLLLETD…IMKVEGHVFP (129 aa)) is the VHS domain. The segment at 160–220 (WVDAEECHRC…VCEPCFEQLN (61 aa)) adopts an FYVE-type zinc-finger fold. Zn(2+) is bound by residues cysteine 166, cysteine 169, cysteine 182, cysteine 185, cysteine 190, and cysteine 193. N6-acetyllysine is present on lysine 207. Positions 212 and 215 each coordinate Zn(2+). Residues 223 to 319 (AEGKAASTTE…SPVNSSAPLA (97 aa)) form a disordered region. The segment at 225-541 (GKAASTTELP…QRLQEQEKER (317 aa)) is interaction with SNX1. Positions 258–277 (QEEEELQLALALSQSEAEEK) constitute a UIM domain. Over residues 292 to 311 (AEPTPVASSAPPASSLYSSP) the composition is skewed to low complexity. Phosphotyrosine occurs at positions 308, 329, and 334. The disordered stretch occupies residues 338-370 (KQEEARKSPTPSAPVPLTEPTAQPGEGHAIPAN). The interval 443-541 (SINTMHPQLL…QRLQEQEKER (99 aa)) is interaction with SNAP25 and TRAK2. The interaction with STAM stretch occupies residues 452-570 (LELLNQLDER…FSLPYAQLQA (119 aa)). The interval 478 to 777 (ARGALSALRE…GSEAQLISFD (300 aa)) is interaction with NF2. Lysine 549 carries the N6-succinyllysine modification. Residues 645–658 (AAAQGPAGPTTSPA) show a composition bias toward low complexity. Disordered regions lie at residues 645–698 (AAAQ…YMGS) and 712–777 (NLMP…ISFD). Composition is skewed to polar residues over residues 659 to 698 (YSSY…YMGS) and 730 to 739 (PYISGQQPVY). The segment covering 753-777 (PPVAQQPPAQGPPAQGSEAQLISFD) has biased composition (low complexity).

As to quaternary structure, component of the ESCRT-0 complex composed of STAM or STAM2 and HGS. Part of a complex at least composed of HSG, STAM2 (or probably STAM) and EPS15. Interacts with STAM. Interacts with STAM2. Interacts with EPS15; the interaction is direct, calcium-dependent and inhibited by SNAP25. Identified in a complex with STAM and LITAF. Found in a complex with STAM and E3 ligase ITCH and DTX3L. Interacts with E3 ligase DTX3L; the interaction brings together STAM and HSG, promotes their recruitment to early endosomes and decreases STAM and HGS ubiquitination by ITCH. Interacts with NF2; the interaction is direct. Interacts with ubiquitin; the interaction is direct. Interacts with VPS37C. Interacts with SMAD1, SMAD2 and SMAD3. Interacts with TSG101; the interaction mediates the association with the ESCRT-I complex. Interacts with SNAP25; the interaction is direct and decreases with addition of increasing concentrations of free calcium. Interacts with SNX1; the interaction is direct. Component of a 550 kDa membrane complex at least composed of HGS and SNX1 but excluding EGFR. Interacts with TRAK1. Interacts with TRAK2. Component of the CART complex, at least composed of ACTN4, HGS/HRS, MYO5B and TRIM3. Interacts (via UIM domain) with UBQLN1 (via ubiquitin-like domain). Interacts with ARRDC3. Identified in a complex containing at least ARRDC4, AVPR2 and HGS. Interacts with LAPTM4B; promotes HGS ubiquitination. Post-translationally, phosphorylated on Tyr-334. A minor site of phosphorylation on Tyr-329 is detected. Phosphorylation occurs in response to EGF, IL-2, GM-CSF and HGF. Ubiquitinated by ITCH.

It is found in the cytoplasm. It localises to the early endosome membrane. The protein localises to the endosome. The protein resides in the multivesicular body membrane. In terms of biological role, involved in intracellular signal transduction mediated by cytokines and growth factors. When associated with STAM it suppresses DNA signaling upon stimulation by IL-2 and GM-CSF. Could be a direct effector of PI3-kinase in vesicular pathway via early endosomes and may regulate trafficking to early and late endosomes by recruiting clathrin. May concentrate ubiquitinated receptors within clathrin-coated regions. Involved in down-regulation of receptor tyrosine kinase via multivesicular body (MVBs) when complexed with STAM (ESCRT-0 complex). The ESCRT-0 complex binds ubiquitin and acts as a sorting machinery that recognizes ubiquitinated receptors and transfers them to further sequential lysosomal sorting/trafficking processes. May contribute to the efficient recruitment of SMADs to the activin receptor complex. Involved in receptor recycling via its association with the CART complex, a multiprotein complex required for efficient transferrin receptor recycling but not for EGFR degradation. The protein is Hepatocyte growth factor-regulated tyrosine kinase substrate (HGS) of Bos taurus (Bovine).